Reading from the N-terminus, the 146-residue chain is Large ribosomal subunit protein uL23m (146 aa).

A disordered region spans residues Pro-108 to Pro-138. Over residues Phe-111–Glu-120 the composition is skewed to basic and acidic residues.

This sequence belongs to the universal ribosomal protein uL23 family. In terms of assembly, component of the mitochondrial ribosome large subunit (39S) which comprises a 16S rRNA and about 50 distinct proteins.

It localises to the mitochondrion. The chain is Large ribosomal subunit protein uL23m (Mrpl23) from Mus musculus (Mouse).